Consider the following 262-residue polypeptide: Ribosomal RNA small subunit methyltransferase A (262 aa).

Residues H16, L18, G43, E64, D89, and N109 each contribute to the S-adenosyl-L-methionine site.

The protein belongs to the class I-like SAM-binding methyltransferase superfamily. rRNA adenine N(6)-methyltransferase family. RsmA subfamily.

It localises to the cytoplasm. It carries out the reaction adenosine(1518)/adenosine(1519) in 16S rRNA + 4 S-adenosyl-L-methionine = N(6)-dimethyladenosine(1518)/N(6)-dimethyladenosine(1519) in 16S rRNA + 4 S-adenosyl-L-homocysteine + 4 H(+). Specifically dimethylates two adjacent adenosines (A1518 and A1519) in the loop of a conserved hairpin near the 3'-end of 16S rRNA in the 30S particle. May play a critical role in biogenesis of 30S subunits. This is Ribosomal RNA small subunit methyltransferase A from Xanthomonas campestris pv. campestris (strain 8004).